Here is a 248-residue protein sequence, read N- to C-terminus: MLPNAAGLLVAGVVSLSGVAAHGHVSKIFLDGQEYGGWIADVYPYMPEPPETIGWPTNVTDNGFVSPDRFSSPEIICHRGGVPSAISAPVSAGGTVELEWSTWPESHHGPVLNYLAKVDGDFSDIGPSTLQFFKFDETGLVSGSNPGYWGTDVMLANGRRYSMMIPSTIAPGKYVLRHELVALQNVGAAQLYPQCINIEVTSNTTGGDVNPGGTPATELYSPADPGFLFNIYEQYDSYPIPGQDVFRD.

The first 21 residues, 1 to 21, serve as a signal peptide directing secretion; sequence MLPNAAGLLVAGVVSLSGVAA. Histidine 22 is a binding site for Cu(2+). N-linked (GlcNAc...) asparagine glycosylation occurs at asparagine 58. An intrachain disulfide couples cysteine 77 to cysteine 195. Residue histidine 107 coordinates Cu(2+). Glutamine 190 provides a ligand contact to O2. Tyrosine 192 lines the Cu(2+) pocket. Asparagine 203 carries an N-linked (GlcNAc...) asparagine glycan.

It belongs to the polysaccharide monooxygenase AA9 family. Cu(2+) is required as a cofactor.

Its subcellular location is the secreted. The catalysed reaction is [(1-&gt;4)-beta-D-glucosyl]n+m + reduced acceptor + O2 = 4-dehydro-beta-D-glucosyl-[(1-&gt;4)-beta-D-glucosyl]n-1 + [(1-&gt;4)-beta-D-glucosyl]m + acceptor + H2O.. Its function is as follows. Lytic polysaccharide monooxygenase (LPMO) that depolymerizes crystalline and amorphous polysaccharides via the oxidation of scissile alpha- or beta-(1-4)-glycosidic bonds, yielding C1 or C4 oxidation products. Catalysis by LPMOs requires the reduction of the active-site copper from Cu(II) to Cu(I) by a reducing agent and H(2)O(2) or O(2) as a cosubstrate. In Malbranchea cinnamomea (Thermophilic fungus), this protein is AA9 family lytic polysaccharide monooxygenase G.